The chain runs to 303 residues: RING finger protein 148 (303 aa).

The signal sequence occupies residues 1-34; the sequence is MSLLRITSSAHSSASSRLWRLGIFLLLSLPDSKG. N-linked (GlcNAc...) asparagine glycosylation is present at Asn43. Positions 65–167 constitute a PA domain; the sequence is HSPLERVSGV…LKGMELLHLI (103 aa). The chain crosses the membrane as a helical span at residues 186–208; sequence WLSHYIMSLFTFLTATVAYLFLY. The segment at 256–297 adopts an RING-type; atypical zinc-finger fold; the sequence is CVVCFDIYKPQDVVRILTCKHIFHKACIDPWLLAHRTCPMCK.

It is found in the membrane. This chain is RING finger protein 148 (RNF148), found in Bos taurus (Bovine).